A 149-amino-acid chain; its full sequence is uncharacterized protein (149 aa).

This is an uncharacterized protein from Archaeoglobus fulgidus (strain ATCC 49558 / DSM 4304 / JCM 9628 / NBRC 100126 / VC-16).